The following is a 647-amino-acid chain: Beta-glucosidase-like SFR2, chloroplastic (647 aa).

The segment at 116–140 is disordered; the sequence is SAAGDGGSQQSWRSTGGENIGDREQ. Residues 123-132 are compositionally biased toward polar residues; that stretch reads SQQSWRSTGG. An N-linked (GlcNAc...) asparagine glycan is attached at asparagine 169. Residues histidine 258, 302-303, tyrosine 414, glutamate 466, tryptophan 504, 511-512, and phenylalanine 520 contribute to the a beta-D-glucoside site; these read NE and EW. Glutamate 303 (proton donor) is an active-site residue. Glutamate 466 (nucleophile) is an active-site residue.

The protein belongs to the glycosyl hydrolase 1 family.

It is found in the plastid. Its subcellular location is the chloroplast outer membrane. It carries out the reaction 2 a 1,2-diacyl-3-O-(beta-D-galactosyl)-sn-glycerol = a 1,2-diacyl-3-O-[beta-D-galactosyl-(1-&gt;6)-beta-D-galactosyl]-sn-glycerol + a 1,2-diacyl-sn-glycerol. Galactosyltransferase synthesizing digalactosyldiacylglycerol from monogalactosyldiacylglycerol in the absence of UDP-galactose. Potentially involved in freezing tolerance. The polypeptide is Beta-glucosidase-like SFR2, chloroplastic (Oryza sativa subsp. japonica (Rice)).